A 196-amino-acid polypeptide reads, in one-letter code: Dephospho-CoA kinase (196 aa).

Residues 5 to 196 (IIGLTGGIAT…QVDIALNFEL (192 aa)) enclose the DPCK domain. 13 to 18 (ATGKTT) lines the ATP pocket.

The protein belongs to the CoaE family.

The protein resides in the cytoplasm. The enzyme catalyses 3'-dephospho-CoA + ATP = ADP + CoA + H(+). It participates in cofactor biosynthesis; coenzyme A biosynthesis; CoA from (R)-pantothenate: step 5/5. Its function is as follows. Catalyzes the phosphorylation of the 3'-hydroxyl group of dephosphocoenzyme A to form coenzyme A. This is Dephospho-CoA kinase from Trichormus variabilis (strain ATCC 29413 / PCC 7937) (Anabaena variabilis).